Consider the following 153-residue polypeptide: Endoribonuclease YbeY (153 aa).

The Zn(2+) site is built by histidine 118, histidine 122, and histidine 128.

It belongs to the endoribonuclease YbeY family. Zn(2+) serves as cofactor.

It localises to the cytoplasm. Single strand-specific metallo-endoribonuclease involved in late-stage 70S ribosome quality control and in maturation of the 3' terminus of the 16S rRNA. The protein is Endoribonuclease YbeY of Pelagibacter ubique (strain HTCC1062).